The chain runs to 365 residues: Palmitoyltransferase ZDHHC20 (365 aa).

Residues 1–14 are Cytoplasmic-facing; that stretch reads MAPCTLWRCCQRTV. Residues 15–35 form a helical membrane-spanning segment; the sequence is GWVPVLFITFVVVWSYYAYVV. Residues 36–53 lie on the Lumenal side of the membrane; it reads ELCVFTLSGNGENGKAVV. The helical transmembrane segment at 54 to 74 threads the bilayer; sequence YLVAFHLFFVMFVWSYWMTIF. Residues 75–169 are Cytoplasmic-facing; that stretch reads TSPASPSKEF…NNCVGFSNYK (95 aa). A DHHC domain is found at 126–176; it reads RYCERCQLIKPDRAHHCSACDMCILKMDHHCPWVNNCVGFSNYKFFLLFLF. Zn(2+) contacts are provided by Cys-128 and Cys-131. Substrate-binding positions include Lys-135 and 140–143; that span reads HHCS. The Zn(2+) site is built by His-141, Cys-142, Cys-145, Cys-148, and His-155. The S-palmitoyl cysteine intermediate role is filled by Cys-156. Cys-162 is a Zn(2+) binding site. Residues 170–190 form a helical membrane-spanning segment; that stretch reads FFLLFLFYSLLYCLFVATTVL. The Lumenal segment spans residues 191–207; sequence QYFIKFWTNELTDTRAK. The helical transmembrane segment at 208 to 231 threads the bilayer; that stretch reads FHVLFLFFVSTMFFISVLSLLSYH. The Cytoplasmic segment spans residues 232 to 365; sequence CWLVGKNRTT…NNHVTVAIEN (134 aa). The segment at 301-365 is disordered; sequence PEQASVSNQS…NNHVTVAIEN (65 aa). Polar residues predominate over residues 302–321; it reads EQASVSNQSESARSIGSNQP. Phosphoserine is present on residues Ser-305 and Ser-330.

Belongs to the DHHC palmitoyltransferase family. Post-translationally, autopalmitoylated (in vitro).

It localises to the golgi apparatus membrane. Its subcellular location is the cell membrane. The protein resides in the cytoplasm. It is found in the perinuclear region. The protein localises to the endoplasmic reticulum membrane. It localises to the endoplasmic reticulum-Golgi intermediate compartment membrane. The catalysed reaction is L-cysteinyl-[protein] + hexadecanoyl-CoA = S-hexadecanoyl-L-cysteinyl-[protein] + CoA. The enzyme catalyses L-cysteinyl-[protein] + tetradecanoyl-CoA = S-tetradecanoyl-L-cysteinyl-[protein] + CoA. It carries out the reaction L-cysteinyl-[protein] + octadecanoyl-CoA = S-octadecanoyl-L-cysteinyl-[protein] + CoA. In terms of biological role, palmitoyltransferase that could catalyze the addition of palmitate onto various protein substrates. Catalyzes palmitoylation of Cys residues in the cytoplasmic C-terminus of EGFR, and modulates the duration of EGFR signaling by modulating palmitoylation-dependent EGFR internalization and degradation. Has a preference for acyl-CoA with C16 fatty acid chains. Can also utilize acyl-CoA with C14 and C18 fatty acid chains. May palmitoylate CALHM1 subunit of gustatory voltage-gated ion channels and modulate channel gating and kinetics. This is Palmitoyltransferase ZDHHC20 from Bos taurus (Bovine).